The chain runs to 283 residues: Bifunctional protein FolD (283 aa).

NADP(+) is bound by residues 165–167 (GRS), serine 190, and valine 231.

The protein belongs to the tetrahydrofolate dehydrogenase/cyclohydrolase family. As to quaternary structure, homodimer. Interacts with BrxC.

The enzyme catalyses (6R)-5,10-methylene-5,6,7,8-tetrahydrofolate + NADP(+) = (6R)-5,10-methenyltetrahydrofolate + NADPH. It catalyses the reaction (6R)-5,10-methenyltetrahydrofolate + H2O = (6R)-10-formyltetrahydrofolate + H(+). Its pathway is one-carbon metabolism; tetrahydrofolate interconversion. Its function is as follows. Catalyzes the oxidation of 5,10-methylenetetrahydrofolate to 5,10-methenyltetrahydrofolate and then the hydrolysis of 5,10-methenyltetrahydrofolate to 10-formyltetrahydrofolate. In Bacillus subtilis (strain 168), this protein is Bifunctional protein FolD.